Consider the following 395-residue polypeptide: Renin (395 aa).

The signal sequence occupies residues 1–21 (MLQSWEFVLLISCFLCFSSDA). The propeptide at 22 to 43 (LQRISLKKMPSIRETLQEMGMK) is activation peptide. An N-linked (GlcNAc...) asparagine glycan is attached at Asn64. In terms of domain architecture, Peptidase A1 spans 79 to 392 (YYGEISIGTP…DRQNNRIGFA (314 aa)). Asp97 is a catalytic residue. 2 disulfides stabilise this stretch: Cys110–Cys117 and Cys274–Cys278. Residue Asp283 is part of the active site. Cys316 and Cys351 are oxidised to a cystine.

This sequence belongs to the peptidase A1 family. N-glycosylated. As to expression, expressed by the venom gland (at protein level).

It is found in the secreted. It carries out the reaction Cleavage of Leu-|-Xaa bond in angiotensinogen to generate angiotensin I.. Its activity is regulated as follows. Inhibited completely by aspartyl protease inhibitor pepstatin A, but not by the serine- or metalloproteinase inhibitors PMSF or EDTA. Its function is as follows. Renin is a highly specific endopeptidase, whose only known function is to generate angiotensin I from angiotensinogen in the plasma, initiating a cascade of reactions that produce an elevation of blood pressure and increased sodium retention by the kidney. This protein is also found in snake venom and shown to specifically cleave human and porcine angiotensinogen into angiotensin I. It does not have general protease activity, no cleavage of alpha or beta casein. May be directly responsible for elevation of blood pressure in the victims of envenomation. The sequence is that of Renin from Echis ocellatus (Ocellated saw-scaled viper).